A 1462-amino-acid chain; its full sequence is MGQIFSRSASPIPRPPRGLAAHHWLNFLQAAYRLEPGPSSYDFHQLKKFLKIALETPARICPINYSLLASLLPKGYPGRVNEILHILIQTQAQIPSRPAPPPPSSPTHDPPDSDPQIPPPYVEPTAPQVLPVMHPHGAPPNHRPWQMKDLQAIKQEVSQAAPGSPQFMQTIRLAVQQFDPTAKDLQDLLQYLCSSLVASLHHQQLDSLISEAETRGITGYNPLAGPLRVQANNPQQQGLRREYQQLWLAAFAALPGSAKDPSWASILQGLEEPYHAFVERLNIALDNGLPEGTPKDPILRSLAYSNANKECQKLLQARGHTNSPLGDMLRACQTWTPKDKTKVLVVQPKKPPPNQPCFRCGKAGHWSRDCTQPRPPPGPCPLCQDPTHWKRDCPRLKPTIPEPEPEEDALLLDLPADIPHPKNLHRGGGLTSPPTLQQVLPNQDPASILPVIPLDPARRPVIKAQVDTQTSHPKTIEALLDTGADMTVLPIALFSSNTPLKNTSVLGAGGQTQDHFKLTSLPVLIRLPFRTTPIVLTSCLVDTKNNWAIIGRDALQQCQGVLYLPEAKRPPVILPIQAPAVLGLEHLPRPPQISQFPLNPERLQALQHLVRKALEAGHIEPYTGPGNNPVFPVKKANGTWRFIHDLRATNSLTIDLSSSSPGPPDLSSLPTTLAHLQTIDLRDAFFQIPLPKQFQPYFAFTVPQQCNYGPGTRYAWKVLPQGFKNSPTLFEMQLAHILQPIRQAFPQCTILQYMDDILLASPSHEDLLLLSEATMASLISHGLPVSENKTQQTPGTIKFLGQIISPNHLTYDAVPTVPIRSRWALPELQALLGEIQWVSKGTPTLRQPLHSLYCALQRHTDPRDQIYLNPSQVQSLVQLRQALSQNCRSRLVQTLPLLGAIMLTLTGTTTVVFQSKEQWPLVWLHAPLPHTSQCPWGQLLASAVLLLDKYTLQSYGLLCQTIHHNISTQTFNQFIQTSDHPSVPILLHHSHRFKNLGAQTGELWNTFLKTAAPLAPVKALMPVFTLSPVIINTAPCLFSDGSTSRAAYILWDKQILSQRSFPLPPPHKSAQRAELLGLLHGLSSARSWRCLNIFLDSKYLYHYLRTLALGTFQGRSSQAPFQALLPRLLSRKVVYLHHVRSHTNLPDPISRLNALTDALLITPVLQLSPAELHSFTHCGQTALTLQGATTTEASNILRSCHACRGGNPQHQMPRGHIRRGLLPNHIWQGDITHFKYKNTLYRLHVWVDTFSGAISATQKRKETSSEAISSLLQAIAHLGKPSYINTDNGPAYISQDFLNMCTSLAIRHTTHVPYNPTSSGLVERSNGILKTLLYKYFTDKPDLPMDNALSIALWTINHLNVLTNCHKTRWQLHHSPRLQPIPETRSLSNKQTHWYYFKLPGLNSRQWKGPQEALQEAAGAALIPVSASSAQWIPWRLLKRAACPRPVGGPADPKEKDLQHHG.

Glycine 2 carries N-myristoyl glycine; by host lipidation. Positions 93 to 144 (QIPSRPAPPPPSSPTHDPPDSDPQIPPPYVEPTAPQVLPVMHPHGAPPNHRP) are disordered. Phosphoserine; by host MAPK1 is present on serine 105. The short motif at 118–121 (PPPY) is the PPXY motif element. The PTAP/PSAP motif signature appears at 124–127 (PTAP). CCHC-type zinc fingers lie at residues 355-372 (QPCF…DCTQ) and 378-395 (GPCP…DCPR). One can recognise a Peptidase A2 domain in the interval 476 to 554 (IEALLDTGAD…NNWAIIGRDA (79 aa)). Residue aspartate 481 is the For protease activity; shared with dimeric partner of the active site. A Reverse transcriptase domain is found at 614-804 (LEAGHIEPYT…GTIKFLGQII (191 aa)). Residues aspartate 680, aspartate 755, aspartate 756, aspartate 1040, glutamate 1074, aspartate 1096, aspartate 1157, aspartate 1230, and aspartate 1287 each contribute to the Mg(2+) site. Positions 1031–1165 (INTAPCLFSD…TDALLITPVL (135 aa)) constitute an RNase H type-1 domain. An Integrase catalytic domain is found at 1219 to 1388 (RGLLPNHIWQ…QPIPETRSLS (170 aa)). Positions 1393-1443 (HWYYFKLPGLNSRQWKGPQEALQEAAGAALIPVSASSAQWIPWRLLKRAAC) form a DNA-binding region, integrase-type.

As to quaternary structure, homodimer; the homodimers are part of the immature particles. Interacts with human TSG101 and NEDD4; these interactions are essential for budding and release of viral particles. In terms of assembly, homodimer; further assembles as homohexamers. Mg(2+) serves as cofactor. Phosphorylation of the matrix protein p19 by MAPK1 seems to play a role in budding. In terms of processing, myristoylated. Myristoylation of the matrix (MA) domain mediates the transport and binding of Gag polyproteins to the host plasma membrane and is required for the assembly of viral particles. Post-translationally, specific enzymatic cleavages by the viral protease yield mature proteins. The polyprotein is cleaved during and after budding, this process is termed maturation. The protease is autoproteolytically processed at its N- and C-termini.

The protein resides in the virion. The catalysed reaction is Endonucleolytic cleavage to 5'-phosphomonoester.. It catalyses the reaction DNA(n) + a 2'-deoxyribonucleoside 5'-triphosphate = DNA(n+1) + diphosphate. The matrix domain targets Gag, Gag-Pro and Gag-Pro-Pol polyproteins to the plasma membrane via a multipartite membrane binding signal, that includes its myristoylated N-terminus. Its function is as follows. Matrix protein. Functionally, forms the spherical core of the virus that encapsulates the genomic RNA-nucleocapsid complex. In terms of biological role, binds strongly to viral nucleic acids and promote their aggregation. Also destabilizes the nucleic acids duplexes via highly structured zinc-binding motifs. The aspartyl protease mediates proteolytic cleavages of Gag and Gag-Pol polyproteins during or shortly after the release of the virion from the plasma membrane. Cleavages take place as an ordered, step-wise cascade to yield mature proteins. This process is called maturation. Displays maximal activity during the budding process just prior to particle release from the cell. Cleaves the translation initiation factor eIF4G leading to the inhibition of host cap-dependent translation. Its function is as follows. RT is a multifunctional enzyme that converts the viral RNA genome into dsDNA in the cytoplasm, shortly after virus entry into the cell. This enzyme displays a DNA polymerase activity that can copy either DNA or RNA templates, and a ribonuclease H (RNase H) activity that cleaves the RNA strand of RNA-DNA heteroduplexes in a partially processive 3' to 5'-endonucleasic mode. Conversion of viral genomic RNA into dsDNA requires many steps. A tRNA-Pro binds to the primer-binding site (PBS) situated at the 5'-end of the viral RNA. RT uses the 3' end of the tRNA primer to perform a short round of RNA-dependent minus-strand DNA synthesis. The reading proceeds through the U5 region and ends after the repeated (R) region which is present at both ends of viral RNA. The portion of the RNA-DNA heteroduplex is digested by the RNase H, resulting in a ssDNA product attached to the tRNA primer. This ssDNA/tRNA hybridizes with the identical R region situated at the 3' end of viral RNA. This template exchange, known as minus-strand DNA strong stop transfer, can be either intra- or intermolecular. RT uses the 3' end of this newly synthesized short ssDNA to perform the RNA-dependent minus-strand DNA synthesis of the whole template. RNase H digests the RNA template except for a polypurine tract (PPT) situated at the 5' end of the genome. It is not clear if both polymerase and RNase H activities are simultaneous. RNase H probably can proceed both in a polymerase-dependent (RNA cut into small fragments by the same RT performing DNA synthesis) and a polymerase-independent mode (cleavage of remaining RNA fragments by free RTs). Secondly, RT performs DNA-directed plus-strand DNA synthesis using the PPT that has not been removed by RNase H as primer. PPT and tRNA primers are then removed by RNase H. The 3' and 5' ssDNA PBS regions hybridize to form a circular dsDNA intermediate. Strand displacement synthesis by RT to the PBS and PPT ends produces a blunt ended, linear dsDNA copy of the viral genome that includes long terminal repeats (LTRs) at both ends. Functionally, catalyzes viral DNA integration into the host chromosome, by performing a series of DNA cutting and joining reactions. The protein is Gag-Pro-Pol polyprotein (gag-pro-pol) of Homo sapiens (Human).